A 161-amino-acid chain; its full sequence is Non-secretory ribonuclease (161 aa).

The signal sequence occupies residues 1-27 (MVPKLFTSQICLLLLLGLMGVEGSLHA). W34 carries a C-linked (Man) tryptophan glycan. H42 serves as the catalytic Proton acceptor. Residue N44 is glycosylated (N-linked (GlcNAc...) asparagine). Cystine bridges form between C50–C110, C64–C123, C82–C138, and C89–C98. Y60 is modified (3'-nitrotyrosine). 65-69 (KNQNT) provides a ligand contact to substrate. N-linked (GlcNAc...) asparagine glycosylation is found at N86, N92, N111, and N119. Residue H156 is the Proton donor of the active site.

The protein belongs to the pancreatic ribonuclease family. In terms of assembly, interacts with and forms a tight 1:1 complex with RNH1. Dimerization of two such complexes may occur.

It localises to the lysosome. It is found in the cytoplasmic granule. The enzyme catalyses an [RNA] containing cytidine + H2O = an [RNA]-3'-cytidine-3'-phosphate + a 5'-hydroxy-ribonucleotide-3'-[RNA].. It carries out the reaction an [RNA] containing uridine + H2O = an [RNA]-3'-uridine-3'-phosphate + a 5'-hydroxy-ribonucleotide-3'-[RNA].. Functionally, this is a non-secretory ribonuclease. It is a pyrimidine specific nuclease with a slight preference for U. Cytotoxin and helminthotoxin. Possesses a wide variety of biological activities. The polypeptide is Non-secretory ribonuclease (RNASE2) (Nomascus leucogenys (Northern white-cheeked gibbon)).